Here is a 401-residue protein sequence, read N- to C-terminus: MEKKKVVLAYSGGLDTSVAIKWLQEKNYDIIALCLDLGEGKDLAFVKEKALSVGAIKSYMIDVQEEYANEYALIAMQAHTLYEGKYPLVSALSRPLIAKKLVEIAEQEGASAVAHGCTGKGNDQVRFEVSIQALNPYLEVIAPVREWKWSREEEIAYAKENDIPIPINLDSPFSIDQNLWGRSNECGILEDPWAAPPEEAYEMTLALEDTPNKPEFVEIGFEAGVPTTLNGTAYSLSELIKTLNALAGKHGVGRIDHVENRLVGIKSREVYECPAAMTLITAHKELEDLTLVKEVAHFKPMIEQKLTELIYNGLWFSPLKQALNAFLQETQKNVTGTVRVKLFKGHAIVEGRKSEYSLYDEKLATYTAQDEFNHDAAVGFISLFGLPTKVYSQVNQKKVEA.

Residue 9–17 (AYSGGLDTS) coordinates ATP. Tyrosine 86 is an L-citrulline binding site. Glycine 116 serves as a coordination point for ATP. Threonine 118, asparagine 122, and aspartate 123 together coordinate L-aspartate. L-citrulline is bound at residue asparagine 122. L-citrulline contacts are provided by arginine 126, serine 174, serine 183, glutamate 259, and tyrosine 271.

The protein belongs to the argininosuccinate synthase family. Type 1 subfamily. In terms of assembly, homotetramer.

The protein resides in the cytoplasm. It carries out the reaction L-citrulline + L-aspartate + ATP = 2-(N(omega)-L-arginino)succinate + AMP + diphosphate + H(+). The protein operates within amino-acid biosynthesis; L-arginine biosynthesis; L-arginine from L-ornithine and carbamoyl phosphate: step 2/3. This is Argininosuccinate synthase from Bacillus mycoides (strain KBAB4) (Bacillus weihenstephanensis).